We begin with the raw amino-acid sequence, 246 residues long: Probable transcriptional regulatory protein WD_0484 (246 aa).

A disordered region spans residues 1 to 22 (MAGHSQFSNIKHRKGAQDAKRS).

This sequence belongs to the TACO1 family.

The protein resides in the cytoplasm. The sequence is that of Probable transcriptional regulatory protein WD_0484 from Wolbachia pipientis wMel.